Consider the following 2245-residue polypeptide: Basic helix-loop-helix domain-containing protein USF3 (2245 aa).

Positions 1-28 are disordered; it reads MPEMTENETPTKKQHRKKNRETHNAVER. One can recognise a bHLH domain in the interval 18 to 69; it reads KNRETHNAVERHRKKKINAGINRIGELIPCSPALKQSKNMILDQAFKYITEL. A coiled-coil region spans residues 77 to 112; sequence LLNGGNNEQAEEIKKLRKQLEEIQKENGRYIELLKA. 13 disordered regions span residues 271–290, 447–470, 881–900, 906–933, 1015–1041, 1164–1238, 1307–1331, 1460–1624, 1636–1664, 1736–1764, 1777–1815, 1834–1859, and 1891–2031; these read LHTCLNDQNSSENKNGQENP, SQTPSSAVTPVLNESGTSPTTSNH, SKSKSAEKSSPPSQESVTSE, AAKSKDSTPNLQQETSQDKPPSSLALSD, KNPQKSSLSDQMDHPDFSSENPKIVDS, PSEA…SITS, IPNSQIQEPLLKPSHESRKDSAKRA, IKQQ…VSGH, LEQQMVSQPSIVTRSSDMTCTPHRPERNR, TFKPSGASQQPQSNFEVQSSRNNEIGNPV, ISQNTGPPPIDRQKRLSYPPVQSIPTGNGIPSRDSENTC, GSQRSLSEHQRNTQCGPSSAIEYNCP, and STLN…QPAT. The span at 273 to 288 shows a compositional bias: polar residues; sequence TCLNDQNSSENKNGQE. Over residues 881–896 the composition is skewed to low complexity; that stretch reads SKSKSAEKSSPPSQES. The segment covering 912 to 925 has biased composition (polar residues); that stretch reads STPNLQQETSQDKP. 2 stretches are compositionally biased toward polar residues: residues 1185-1202 and 1219-1238; these read GTGQAEATPNEFNSQGSI and IKTSNASLQDSTSQPPSITS. Basic and acidic residues predominate over residues 1319–1331; it reads PSHESRKDSAKRA. A compositionally biased stretch (low complexity) spans 1462–1478; that stretch reads QQQQQQQQQQQQQQQQQ. Polar residues-rich tracts occupy residues 1501-1520 and 1528-1538; these read SVHSQPHNVHQQRTLQQEVQ and VQGTQTSQLSL. Residues 1560–1569 are compositionally biased toward low complexity; the sequence is QQMQQQMQQH. Residues 1570–1585 are compositionally biased toward polar residues; it reads FGSSQTEKSCENPSTS. The segment covering 1593 to 1624 has biased composition (low complexity); that stretch reads QNHLNQDIMHQQQDVGSRQQGSGVSSEHVSGH. The segment covering 1636–1654 has biased composition (polar residues); sequence LEQQMVSQPSIVTRSSDMT. 2 stretches are compositionally biased toward polar residues: residues 1904 to 1923 and 1998 to 2007; these read GDIQGRNTSPNVSVQKSNPM and SGNQRQSTVF.

It localises to the nucleus. Its function is as follows. Involved in the negative regulation of epithelial-mesenchymal transition, the process by which epithelial cells lose their polarity and adhesion properties to become mesenchymal cells with enhanced migration and invasive properties. The polypeptide is Basic helix-loop-helix domain-containing protein USF3 (Homo sapiens (Human)).